The sequence spans 93 residues: Pyrimidine/purine nucleoside phosphorylase (93 aa).

This sequence belongs to the nucleoside phosphorylase PpnP family.

The catalysed reaction is a purine D-ribonucleoside + phosphate = a purine nucleobase + alpha-D-ribose 1-phosphate. It catalyses the reaction adenosine + phosphate = alpha-D-ribose 1-phosphate + adenine. The enzyme catalyses cytidine + phosphate = cytosine + alpha-D-ribose 1-phosphate. It carries out the reaction guanosine + phosphate = alpha-D-ribose 1-phosphate + guanine. The catalysed reaction is inosine + phosphate = alpha-D-ribose 1-phosphate + hypoxanthine. It catalyses the reaction thymidine + phosphate = 2-deoxy-alpha-D-ribose 1-phosphate + thymine. The enzyme catalyses uridine + phosphate = alpha-D-ribose 1-phosphate + uracil. It carries out the reaction xanthosine + phosphate = alpha-D-ribose 1-phosphate + xanthine. Catalyzes the phosphorolysis of diverse nucleosides, yielding D-ribose 1-phosphate and the respective free bases. Can use uridine, adenosine, guanosine, cytidine, thymidine, inosine and xanthosine as substrates. Also catalyzes the reverse reactions. This is Pyrimidine/purine nucleoside phosphorylase from Aliivibrio salmonicida (strain LFI1238) (Vibrio salmonicida (strain LFI1238)).